The primary structure comprises 244 residues: 5-oxoprolinase subunit A (244 aa).

This sequence belongs to the LamB/PxpA family. In terms of assembly, forms a complex composed of PxpA, PxpB and PxpC.

The enzyme catalyses 5-oxo-L-proline + ATP + 2 H2O = L-glutamate + ADP + phosphate + H(+). Catalyzes the cleavage of 5-oxoproline to form L-glutamate coupled to the hydrolysis of ATP to ADP and inorganic phosphate. This chain is 5-oxoprolinase subunit A, found in Escherichia coli O157:H7.